The chain runs to 368 residues: Peptide chain release factor 2 (368 aa).

Gln251 carries the N5-methylglutamine modification.

Belongs to the prokaryotic/mitochondrial release factor family. In terms of processing, methylated by PrmC. Methylation increases the termination efficiency of RF2.

Its subcellular location is the cytoplasm. In terms of biological role, peptide chain release factor 2 directs the termination of translation in response to the peptide chain termination codons UGA and UAA. This Nitratiruptor sp. (strain SB155-2) protein is Peptide chain release factor 2.